We begin with the raw amino-acid sequence, 248 residues long: Adenosylcobinamide-GDP ribazoletransferase (248 aa).

Helical transmembrane passes span 24–44 (EINLKKGSALLPFVGVIIGAW), 70–90 (IIITGGFHVDALADTADGLFS), 106–126 (VGANGVIAICFYFLFYGALFL), 134–154 (IGWLFFVLPIVAKGVTMLLFA), 168–188 (IFLGVPWWPIVIAQVIVLVAL), 189–209 (GAFFSYIGVIAYAGVILFTII), and 228–248 (AGGQMGQLICLFCLVLLWGLI).

It belongs to the CobS family. Mg(2+) serves as cofactor.

It is found in the cell membrane. It carries out the reaction alpha-ribazole + adenosylcob(III)inamide-GDP = adenosylcob(III)alamin + GMP + H(+). The enzyme catalyses alpha-ribazole 5'-phosphate + adenosylcob(III)inamide-GDP = adenosylcob(III)alamin 5'-phosphate + GMP + H(+). The protein operates within cofactor biosynthesis; adenosylcobalamin biosynthesis; adenosylcobalamin from cob(II)yrinate a,c-diamide: step 7/7. Functionally, joins adenosylcobinamide-GDP and alpha-ribazole to generate adenosylcobalamin (Ado-cobalamin). Also synthesizes adenosylcobalamin 5'-phosphate from adenosylcobinamide-GDP and alpha-ribazole 5'-phosphate. This chain is Adenosylcobinamide-GDP ribazoletransferase, found in Listeria monocytogenes serotype 4a (strain HCC23).